Reading from the N-terminus, the 375-residue chain is Putative F-box protein At1g12190 (375 aa).

The region spanning 1–46 (MACVKFPWELMEEILYRVPSLSLSRFKTVSKEWNTLLNDKTFIKKH) is the F-box domain.

This is Putative F-box protein At1g12190 from Arabidopsis thaliana (Mouse-ear cress).